The following is a 663-amino-acid chain: Syntabulin (663 aa).

2 disordered regions span residues 1–202 (MGPL…PREK) and 216–267 (VNIH…PEQY). The segment at 2–417 (GPLRESKKEH…DTMADGLSLE (416 aa)) is sufficient for interaction with KIF5B. A Phosphoserine modification is found at S50. Residues 57 to 73 (FNPSSSGRSARTVSSNS) are compositionally biased toward low complexity. The span at 81 to 97 (CPSSQSVSPVKTPSDAG) shows a compositional bias: polar residues. S107 carries the phosphoserine modification. Composition is skewed to low complexity over residues 145–158 (EADF…GSIS), 188–198 (SSHKPGSSPSS), and 221–241 (SYAP…SDCS). A coiled-coil region spans residues 271-353 (LQQKEVTVRH…MRSSLADKDK (83 aa)). A sufficient for interaction with STX1A region spans residues 310–417 (REDWIEEECH…DTMADGLSLE (108 aa)). Phosphoserine occurs at positions 396 and 555. Residues 606–626 (SFLVDLLAVAAPVVPTVLWAF) form a helical membrane-spanning segment.

Interacts with STX1A and KIF5B. In terms of tissue distribution, isoform 3, isoform 4 and isoform 5 are expressed in HeLa cell line (at protein level). Isoform 3 is expressed in fetal and adult brain. Isoform 4 is expressed in numerous fetal tissues (brain, kidney, liver, lung, and thymus) and in adult brain, kidney, liver, lung, pancreas, colon, prostate, small intestine, testis and thymus. Isoform 5 is expressed in fetal brain, brain and small intestine.

It localises to the cytoplasm. The protein resides in the cytoskeleton. Its subcellular location is the cytoplasmic vesicle. It is found in the golgi apparatus membrane. Its function is as follows. Part of a kinesin motor-adapter complex that is critical for the anterograde axonal transport of active zone components and contributes to activity-dependent presynaptic assembly during neuronal development. The protein is Syntabulin (SYBU) of Homo sapiens (Human).